Here is a 297-residue protein sequence, read N- to C-terminus: Averufin oxidase stcO (297 aa).

The helical transmembrane segment at 277 to 297 (VVVLGVCILLLLGGLLYSIKA) threads the bilayer.

The protein belongs to the avfA family.

Its subcellular location is the membrane. Its pathway is mycotoxin biosynthesis; sterigmatocystin biosynthesis. Its function is as follows. Averufin oxidase; part of the gene cluster that mediates the biosynthesis of sterigmatocystin (ST), a polyketide-derived furanocoumarin which is part of the most toxic and carcinogenic compounds among the known mycotoxins. The first step in the biosynthesis of sterigmatocystin is the production of hexanoate by the fatty acid synthase (FAS) units stcJ and stcK. The polyketide backbone is assembled by the non-reducing polyketide synthase stcA by condensation of the starter hexanoyl-CoA and 7 malonyl-CoA extender units followed by cyclization and release of norsolorinic acid. Norsolorinic acid is the first stable intermediate in the biosynthesis of sterigmatocystin and is converted into averantin (AVN) by the ketoreductase stcE which reduces the hexanoate ketone to an alcohol. Averantin is then oxidized into 5'-hydroxyaverantin (HAVN) by the cytochrome P450 monooxygenase stcF. 5'-hydroxyaverantin is further converted to 5'-oxyaverantin (OAVN) by the 5'-hydroxyaverantin dehydrogenase stcG. The next step is the conversion of OAVN into averufin (AVF) which is catalyzed by a yet to be identified enzyme. The cytochrome P450 monooxygenase stcB and the flavin-binding monooxygenase stcW are both required for the conversion of averufin to 1-hydroxyversicolorone. The esterase stcI probably catalyzes the formation of versiconal hemiacetal acetate from 1-hydroxyversicolorone. The oxydoreductase stcN then probably catalyzes the biosynthetic step from versiconal to versicolorin B (VERB). The next step is performed by the versicolorin B desaturase stcL to produce versicolorin A (VERA). The ketoreductase stcU and the cytochrome P450 monooxygenase stcS are involved in the conversion of versicolorin A to demethylsterigmatocystin. The Baeyer-Villiger oxidas stcQ and the reductase stcR might be involved in the biosynthetic step from versicolorin A to demethylsterigmatocystin. The final step in the biosynthesis of sterigmatocystin is the methylation of demethylsterigmatocystin catalyzed by the methyltransferase stcP. The polypeptide is Averufin oxidase stcO (Emericella nidulans (strain FGSC A4 / ATCC 38163 / CBS 112.46 / NRRL 194 / M139) (Aspergillus nidulans)).